A 262-amino-acid chain; its full sequence is Pyridoxine 5'-phosphate synthase (262 aa).

Asparagine 6 lines the 3-amino-2-oxopropyl phosphate pocket. Residue 8 to 9 coordinates 1-deoxy-D-xylulose 5-phosphate; the sequence is DH. Arginine 17 lines the 3-amino-2-oxopropyl phosphate pocket. Histidine 41 functions as the Proton acceptor in the catalytic mechanism. 1-deoxy-D-xylulose 5-phosphate is bound by residues arginine 43 and histidine 48. Glutamate 68 serves as the catalytic Proton acceptor. Threonine 98 is a binding site for 1-deoxy-D-xylulose 5-phosphate. Histidine 210 functions as the Proton donor in the catalytic mechanism. 3-amino-2-oxopropyl phosphate-binding positions include glycine 211 and 232–233; that span reads GQ.

Belongs to the PNP synthase family. In terms of assembly, homooctamer; tetramer of dimers.

The protein resides in the cytoplasm. The catalysed reaction is 3-amino-2-oxopropyl phosphate + 1-deoxy-D-xylulose 5-phosphate = pyridoxine 5'-phosphate + phosphate + 2 H2O + H(+). It participates in cofactor biosynthesis; pyridoxine 5'-phosphate biosynthesis; pyridoxine 5'-phosphate from D-erythrose 4-phosphate: step 5/5. Catalyzes the complicated ring closure reaction between the two acyclic compounds 1-deoxy-D-xylulose-5-phosphate (DXP) and 3-amino-2-oxopropyl phosphate (1-amino-acetone-3-phosphate or AAP) to form pyridoxine 5'-phosphate (PNP) and inorganic phosphate. The chain is Pyridoxine 5'-phosphate synthase from Campylobacter jejuni subsp. jejuni serotype O:23/36 (strain 81-176).